A 114-amino-acid chain; its full sequence is Mobility group protein 1A (114 aa).

Residues 5–71 (PKRPLSAYML…EYEKAMKEFE (67 aa)) constitute a DNA-binding region (HMG box). A disordered region spans residues 69–114 (EFERNGGDKSSGASTKKRGKAAEKKKPAKKSKKKDSEDDEEEDESD). A compositionally biased stretch (acidic residues) spans 105–114 (EDDEEEDESD).

It belongs to the HMGB family.

Its subcellular location is the nucleus. The protein localises to the chromosome. Found in condensed chromomeres. Binds preferentially to AT-rich DNA. The protein is Mobility group protein 1A (HMG1A) of Chironomus tentans (Midge).